A 263-amino-acid chain; its full sequence is Ribonuclease 3 (263 aa).

The disordered stretch occupies residues 1–23 (MPHSKNQRKHRHHSHSERRRQPK). The RNase III domain maps to 35 to 164 (FDELLRTLNL…FVGALYLDQG (130 aa)). Glu77 provides a ligand contact to Mg(2+). Asp81 is a catalytic residue. Positions 150 and 153 each coordinate Mg(2+). The active site involves Glu153. The DRBM domain occupies 190–259 (DFKSQLQEFI…AQQALITLSQ (70 aa)).

The protein belongs to the ribonuclease III family. As to quaternary structure, homodimer. Mg(2+) serves as cofactor.

Its subcellular location is the cytoplasm. The catalysed reaction is Endonucleolytic cleavage to 5'-phosphomonoester.. Functionally, digests double-stranded RNA. Involved in the processing of primary rRNA transcript to yield the immediate precursors to the large and small rRNAs (23S and 16S). Processes some mRNAs, and tRNAs when they are encoded in the rRNA operon. Processes pre-crRNA and tracrRNA of type II CRISPR loci if present in the organism. The polypeptide is Ribonuclease 3 (Halalkalibacterium halodurans (strain ATCC BAA-125 / DSM 18197 / FERM 7344 / JCM 9153 / C-125) (Bacillus halodurans)).